A 462-amino-acid polypeptide reads, in one-letter code: Toxin CqTX-A (462 aa).

The signal sequence occupies residues 1–19 (MANMLYFSLLALLFMTGIA). N174 carries an N-linked (GlcNAc...) asparagine glycan.

It belongs to the jellyfish toxin family. Type I subfamily. In terms of processing, contains disulfide bonds. Post-translationally, N-glycosylated.

It is found in the secreted. The protein resides in the nematocyst. The protein localises to the target cell membrane. Functionally, critical allergen and main toxic protein of C.quadrigatus venom. Has potent hemolytic activity. Is lethal to crayfish. Causes cutaneous inflammation in humans. May act as a pore-forming toxin, disrupting normal transmembrane ion concentration gradients in susceptible cells. This is Toxin CqTX-A from Chiropsoides quadrigatus (Box jellyfish).